The sequence spans 293 residues: Shikimate kinase (293 aa).

87–97 (PLAGGLKSSSA) provides a ligand contact to ATP.

The protein belongs to the GHMP kinase family. Archaeal shikimate kinase subfamily.

The protein resides in the cytoplasm. The catalysed reaction is shikimate + ATP = 3-phosphoshikimate + ADP + H(+). It functions in the pathway metabolic intermediate biosynthesis; chorismate biosynthesis; chorismate from D-erythrose 4-phosphate and phosphoenolpyruvate: step 5/7. The chain is Shikimate kinase from Methanosarcina mazei (strain ATCC BAA-159 / DSM 3647 / Goe1 / Go1 / JCM 11833 / OCM 88) (Methanosarcina frisia).